We begin with the raw amino-acid sequence, 199 residues long: GTP cyclohydrolase-2 (199 aa).

Position 49–53 (49–53 (RVHSE)) interacts with GTP. Positions 54, 65, and 67 each coordinate Zn(2+). Residues Gln70, 92-94 (EGR), and Thr114 each bind GTP. Asp126 functions as the Proton acceptor in the catalytic mechanism. Arg128 acts as the Nucleophile in catalysis. Residues Thr149 and Lys154 each contribute to the GTP site.

This sequence belongs to the GTP cyclohydrolase II family. Zn(2+) serves as cofactor.

It catalyses the reaction GTP + 4 H2O = 2,5-diamino-6-hydroxy-4-(5-phosphoribosylamino)-pyrimidine + formate + 2 phosphate + 3 H(+). It participates in cofactor biosynthesis; riboflavin biosynthesis; 5-amino-6-(D-ribitylamino)uracil from GTP: step 1/4. In terms of biological role, catalyzes the conversion of GTP to 2,5-diamino-6-ribosylamino-4(3H)-pyrimidinone 5'-phosphate (DARP), formate and pyrophosphate. The protein is GTP cyclohydrolase-2 of Baumannia cicadellinicola subsp. Homalodisca coagulata.